A 47-amino-acid chain; its full sequence is Large ribosomal subunit protein bL34 (47 aa).

It belongs to the bacterial ribosomal protein bL34 family.

This is Large ribosomal subunit protein bL34 from Mycobacterium sp. (strain JLS).